The sequence spans 236 residues: MPTDMEHTGHYLHLAFLMTTVFSLSPGTKANYTRLWANSTSSWDSVIQNKTGRNQNENINTNPITPEVDYKGNSTNMPETSHIVALTSKSEQELYIPSVVSNSPSTVQSIENTSKSHGEIFKKDVCAENNNNMAMLICLIIIAVLFLICTFLFLSTVVLANKVSSLRRSKQVGKRQPRSNGDFLASGLWPAESDTWKRTKQLTGPNLVMQSTGVLTATRERKDEEGTEKLTNKQIG.

A signal peptide spans 1–30 (MPTDMEHTGHYLHLAFLMTTVFSLSPGTKA). Asn-31, Asn-38, Asn-49, Asn-73, and Asn-112 each carry an N-linked (GlcNAc...) asparagine glycan. Residues 31 to 133 (NYTRLWANST…DVCAENNNNM (103 aa)) are Extracellular-facing. A helical membrane pass occupies residues 134 to 154 (AMLICLIIIAVLFLICTFLFL). The Cytoplasmic portion of the chain corresponds to 155–236 (STVVLANKVS…TEKLTNKQIG (82 aa)). At Ser-211 the chain carries Phosphoserine. The tract at residues 217–236 (ATRERKDEEGTEKLTNKQIG) is disordered. Positions 218–236 (TRERKDEEGTEKLTNKQIG) are enriched in basic and acidic residues.

This sequence belongs to the EVI2A family.

The protein resides in the membrane. May complex with itself or/and other proteins within the membrane, to function as part of a cell-surface receptor. The protein is Protein EVI2A (EVI2A) of Homo sapiens (Human).